We begin with the raw amino-acid sequence, 342 residues long: MSEAIKTDVLIIGAGPCGLFAVFELGLLDMKVHLVDILDKIGGQCAELYPEKPIYDIPGIPFVTGQGLTEALLEQIKPFNPNFHLNEMVESIEKIGDPGFRVTTDAGKVFECKIVVVSAGGGSFQPKRPPVPGIEAYENTSVFYAVRKMEQFRDREILIVGGGDSALDWTLNLHPLAKRITLLHRRDDFRAAPHSVEQMRKLVADGKMDLKIGQVTALEGADGQLSGAQVKGSDNAMSTVSCDTMLPFFGLTMKLGPVANWGLQLENNLVPVETASFETNVPGIFAIGDINTYPGKLKLILSGFHEGALMAQKAHRYVYPDKRLVFQYTTSSSSLQKKLGVN.

C17, D36, Q44, Y49, V89, F124, D289, and T330 together coordinate FAD.

This sequence belongs to the ferredoxin--NADP reductase type 2 family. As to quaternary structure, homodimer. Requires FAD as cofactor.

It carries out the reaction 2 reduced [2Fe-2S]-[ferredoxin] + NADP(+) + H(+) = 2 oxidized [2Fe-2S]-[ferredoxin] + NADPH. This chain is Ferredoxin--NADP reductase, found in Nitrobacter hamburgensis (strain DSM 10229 / NCIMB 13809 / X14).